The sequence spans 65 residues: Large ribosomal subunit protein bL35 (65 aa).

The segment at 1-46 is disordered; sequence MPKIKTNRGAAKRFKPTGSGGFKRAQSHRRHILTKKSTKRKRHLRS. Over residues 25 to 45 the composition is skewed to basic residues; it reads AQSHRRHILTKKSTKRKRHLR.

This sequence belongs to the bacterial ribosomal protein bL35 family.

The sequence is that of Large ribosomal subunit protein bL35 from Thioalkalivibrio sulfidiphilus (strain HL-EbGR7).